We begin with the raw amino-acid sequence, 164 residues long: UPF0304 protein NT01EI_2691 (164 aa).

Belongs to the UPF0304 family.

This Edwardsiella ictaluri (strain 93-146) protein is UPF0304 protein NT01EI_2691.